The following is a 955-amino-acid chain: Beta-agarase B (955 aa).

This sequence belongs to the glycosyl hydrolase 50 family.

It catalyses the reaction Hydrolysis of (1-&gt;4)-beta-D-galactosidic linkages in agarose, giving the tetramer as the predominant product.. Functionally, hydrolyzes agarose to yield predominantly neoagarotetraose and neoagarohexaose. The chain is Beta-agarase B (agaB) from Vibrio sp. (strain JT0107).